The sequence spans 1128 residues: Nck-associated protein 1 (1128 aa).

A disordered region spans residues 640-665 (AVNKKSKKQTGKKGEPEREKPGVESM). A compositionally biased stretch (basic and acidic residues) spans 651 to 665 (KKGEPEREKPGVESM). A helical membrane pass occupies residues 995 to 1015 (IACLLMVFVAVSLPTLASNVM).

The protein belongs to the HEM-1/HEM-2 family.

It localises to the cell membrane. The protein localises to the cell projection. Its subcellular location is the lamellipodium membrane. Part of the WAVE complex that regulates lamellipodia formation. The WAVE complex regulates actin filament reorganization via its interaction with the Arp2/3 complex. Actin remodeling activity is regulated by RAC1. Plays a role in neural tube closure. This Xenopus laevis (African clawed frog) protein is Nck-associated protein 1 (nckap1).